A 170-amino-acid polypeptide reads, in one-letter code: Peptide deformylase (170 aa).

Fe cation-binding residues include cysteine 94 and histidine 136. Residue glutamate 137 is part of the active site. Residue histidine 140 participates in Fe cation binding.

Belongs to the polypeptide deformylase family. Requires Fe(2+) as cofactor.

The enzyme catalyses N-terminal N-formyl-L-methionyl-[peptide] + H2O = N-terminal L-methionyl-[peptide] + formate. Removes the formyl group from the N-terminal Met of newly synthesized proteins. Requires at least a dipeptide for an efficient rate of reaction. N-terminal L-methionine is a prerequisite for activity but the enzyme has broad specificity at other positions. The chain is Peptide deformylase from Agrobacterium fabrum (strain C58 / ATCC 33970) (Agrobacterium tumefaciens (strain C58)).